The chain runs to 252 residues: MISFEFPVTERTRILLRLEYLYGRLAYFIGKDHPHDHHAALQVLFELMETASRADLKADLLQELERQKQMLEALRDNPNVAEETLEGVLEEIERASSQLLALTGKFGQNLRENEWLMAIKQRAGIPGGTCQFDLPSYHLWQQRSAEVRRQDLRRWAAPLMPTADAAEILLHLLRDSGKTYHYVARKGAFQQMSGGKVVQLIQVAYDDNLELLPELSANKYALNIRFVSAVTGEARPRQTEQDVEFQLTNCKF.

The protein belongs to the ZapD family. Interacts with FtsZ.

It localises to the cytoplasm. In terms of biological role, cell division factor that enhances FtsZ-ring assembly. Directly interacts with FtsZ and promotes bundling of FtsZ protofilaments, with a reduction in FtsZ GTPase activity. This is Cell division protein ZapD from Chromobacterium violaceum (strain ATCC 12472 / DSM 30191 / JCM 1249 / CCUG 213 / NBRC 12614 / NCIMB 9131 / NCTC 9757 / MK).